Reading from the N-terminus, the 178-residue chain is Large ribosomal subunit protein uL6 (178 aa).

The protein belongs to the universal ribosomal protein uL6 family. In terms of assembly, part of the 50S ribosomal subunit.

Its function is as follows. This protein binds to the 23S rRNA, and is important in its secondary structure. It is located near the subunit interface in the base of the L7/L12 stalk, and near the tRNA binding site of the peptidyltransferase center. This is Large ribosomal subunit protein uL6 from Desulfatibacillum aliphaticivorans.